Reading from the N-terminus, the 256-residue chain is Sugar fermentation stimulation protein homolog (256 aa).

Belongs to the SfsA family.

This Prochlorococcus marinus (strain MIT 9211) protein is Sugar fermentation stimulation protein homolog.